A 338-amino-acid polypeptide reads, in one-letter code: Glycerol-3-phosphate dehydrogenase [NAD(P)+] (338 aa).

NADPH-binding residues include Ser14, Tyr15, His35, and Lys109. 3 residues coordinate sn-glycerol 3-phosphate: Lys109, Gly138, and Thr140. NADPH is bound at residue Ala142. Residues Lys194, Asp247, Ser257, Arg258, and Asn259 each contribute to the sn-glycerol 3-phosphate site. Lys194 functions as the Proton acceptor in the catalytic mechanism. Residue Arg258 coordinates NADPH. Val282 and Glu284 together coordinate NADPH.

The protein belongs to the NAD-dependent glycerol-3-phosphate dehydrogenase family.

Its subcellular location is the cytoplasm. It carries out the reaction sn-glycerol 3-phosphate + NAD(+) = dihydroxyacetone phosphate + NADH + H(+). It catalyses the reaction sn-glycerol 3-phosphate + NADP(+) = dihydroxyacetone phosphate + NADPH + H(+). It participates in membrane lipid metabolism; glycerophospholipid metabolism. Functionally, catalyzes the reduction of the glycolytic intermediate dihydroxyacetone phosphate (DHAP) to sn-glycerol 3-phosphate (G3P), the key precursor for phospholipid synthesis. This Shewanella putrefaciens (strain CN-32 / ATCC BAA-453) protein is Glycerol-3-phosphate dehydrogenase [NAD(P)+].